The primary structure comprises 88 residues: ATP synthase F(0) complex subunit f, mitochondrial (88 aa).

An N-acetylalanine modification is found at alanine 2. Serine 3 carries the phosphoserine modification. Residue lysine 16 is modified to N6-acetyllysine. A helical transmembrane segment spans residues 62 to 79; the sequence is MVLAAYVVFSYCISYKEL.

The protein belongs to the ATPase F chain family. Component of the ATP synthase complex composed at least of ATP5F1A/subunit alpha, ATP5F1B/subunit beta, ATP5MC1/subunit c (homooctomer), MT-ATP6/subunit a, MT-ATP8/subunit 8, ATP5ME/subunit e, ATP5MF/subunit f, ATP5MG/subunit g, ATP5MK/subunit k, ATP5MJ/subunit j, ATP5F1C/subunit gamma, ATP5F1D/subunit delta, ATP5F1E/subunit epsilon, ATP5PF/subunit F6, ATP5PB/subunit b, ATP5PD/subunit d, ATP5PO/subunit OSCP. ATP synthase complex consists of a soluble F(1) head domain (subunits alpha(3) and beta(3)) - the catalytic core - and a membrane F(0) domain - the membrane proton channel (subunits c, a, 8, e, f, g, k and j). These two domains are linked by a central stalk (subunits gamma, delta, and epsilon) rotating inside the F1 region and a stationary peripheral stalk (subunits F6, b, d, and OSCP).

The protein localises to the mitochondrion. Its subcellular location is the mitochondrion inner membrane. Its function is as follows. Subunit f, of the mitochondrial membrane ATP synthase complex (F(1)F(0) ATP synthase or Complex V) that produces ATP from ADP in the presence of a proton gradient across the membrane which is generated by electron transport complexes of the respiratory chain. ATP synthase complex consist of a soluble F(1) head domain - the catalytic core - and a membrane F(1) domain - the membrane proton channel. These two domains are linked by a central stalk rotating inside the F(1) region and a stationary peripheral stalk. During catalysis, ATP synthesis in the catalytic domain of F(1) is coupled via a rotary mechanism of the central stalk subunits to proton translocation. In vivo, can only synthesize ATP although its ATP hydrolase activity can be activated artificially in vitro. Part of the complex F(0) domain. In Rattus norvegicus (Rat), this protein is ATP synthase F(0) complex subunit f, mitochondrial.